The chain runs to 119 residues: Holo-[acyl-carrier-protein] synthase (119 aa).

2 residues coordinate Mg(2+): Asp-8 and Glu-58.

It belongs to the P-Pant transferase superfamily. AcpS family. Mg(2+) serves as cofactor.

It is found in the cytoplasm. It carries out the reaction apo-[ACP] + CoA = holo-[ACP] + adenosine 3',5'-bisphosphate + H(+). Its function is as follows. Transfers the 4'-phosphopantetheine moiety from coenzyme A to a Ser of acyl-carrier-protein. The protein is Holo-[acyl-carrier-protein] synthase of Streptococcus thermophilus (strain ATCC BAA-491 / LMD-9).